The sequence spans 101 residues: Large ribosomal subunit protein uL24 (101 aa).

The protein belongs to the universal ribosomal protein uL24 family. As to quaternary structure, part of the 50S ribosomal subunit.

In terms of biological role, one of two assembly initiator proteins, it binds directly to the 5'-end of the 23S rRNA, where it nucleates assembly of the 50S subunit. Its function is as follows. One of the proteins that surrounds the polypeptide exit tunnel on the outside of the subunit. This is Large ribosomal subunit protein uL24 from Streptococcus agalactiae serotype III (strain NEM316).